We begin with the raw amino-acid sequence, 324 residues long: Stomatin-like protein stl-1 (324 aa).

This sequence belongs to the band 7/mec-2 family. Widely expressed in most tissues, including body wall muscles, intestinal epithelia, and pharynx and head neurons.

It is found in the mitochondrion. Functionally, mitochondrial protein that probably regulates the biogenesis and the activity of mitochondria. In neurons, involved in mitochondrial fusion and recovery of normal locomotory behavior during reoxygenation; probably acts independently of egl-9 and the canonical hypoxia response pathway. The sequence is that of Stomatin-like protein stl-1 from Caenorhabditis elegans.